Consider the following 533-residue polypeptide: Berberine bridge enzyme-like 12 (533 aa).

Residues 1–20 form the signal peptide; the sequence is MYLIFLLFFAASYSMSLSSA. Residues Cys32 and Cys95 are joined by a disulfide bond. Asn35, Asn70, Asn133, Asn296, Asn412, and Asn417 each carry an N-linked (GlcNAc...) asparagine glycan. The FAD-binding PCMH-type domain occupies 73 to 249; the sequence is SMPKPSIIIV…LAFKVKLVTV (177 aa). The 6-(S-cysteinyl)-8alpha-(pros-histidyl)-FAD (His-Cys) cross-link spans 110–174; it reads HDYDGLSYVS…EVHAFPAGVC (65 aa).

This sequence belongs to the oxygen-dependent FAD-linked oxidoreductase family. FAD is required as a cofactor. Post-translationally, the FAD cofactor is bound via a bicovalent 6-S-cysteinyl, 8alpha-N1-histidyl FAD linkage.

Its subcellular location is the secreted. The protein localises to the cell wall. The polypeptide is Berberine bridge enzyme-like 12 (Arabidopsis thaliana (Mouse-ear cress)).